Reading from the N-terminus, the 282-residue chain is MHAENSFVIDDWYPVGALAETVSGRKYHTRILGTEIWYQLADGTVSAGLADNTAELASKSIYGLLWVSLSDNPRDVIAIPEFAEADRRVVSAGSIRVATSGLRVIENFLDMAHFPFVHTDILGAEPLTEVAAYDVEIDEAADEIRAVNCRFPQPKGSAAASEPVEMQYVYRIARPFIAILYKTCVIDANRLDVLGLFVQPVDQESSIAHTIMCYLDDINTDKQLRDFQQRIFGQDIMILINQVPKALPLNPRHETPVRADALSSAYRRWLNDRNVTFGTTRG.

It carries out the reaction 7-methylxanthine + NADPH + O2 + H(+) = xanthine + formaldehyde + NADP(+) + H2O. The catalysed reaction is 7-methylxanthine + NADH + O2 + H(+) = xanthine + formaldehyde + NAD(+) + H2O. In terms of biological role, involved in the caffeine degradation, which is the essential first step for assimilating the carbon and nitrogen in caffeine. Probably catalyzes the N7-demethylation of 7-methylxanthine to produce xanthine and formaldehyde. The chain is Probable methylxanthine N7-demethylase NdmC from Pseudomonas sp. (strain TJI-51).